A 461-amino-acid chain; its full sequence is Chromosomal replication initiator protein DnaA (461 aa).

The tract at residues 1–83 (MTASLWQQCL…LHFAVGRRPT (83 aa)) is domain I, interacts with DnaA modulators. A domain II region spans residues 83-124 (TAATVQMNTAAAPVADVRIGPAITVPSWTSKQDAMPEINHKS). Residues 125-341 (NINETYTFEN…GALNRVIANA (217 aa)) form a domain III, AAA+ region region. 4 residues coordinate ATP: Gly169, Gly171, Lys172, and Thr173. A domain IV, binds dsDNA region spans residues 342–461 (RFTGKPINID…YSNLIRTLSS (120 aa)).

It belongs to the DnaA family. In terms of assembly, oligomerizes as a right-handed, spiral filament on DNA at oriC.

It is found in the cytoplasm. In terms of biological role, plays an essential role in the initiation and regulation of chromosomal replication. ATP-DnaA binds to the origin of replication (oriC) to initiate formation of the DNA replication initiation complex once per cell cycle. Binds the DnaA box (a 9 base pair repeat at the origin) and separates the double-stranded (ds)DNA. Forms a right-handed helical filament on oriC DNA; dsDNA binds to the exterior of the filament while single-stranded (ss)DNA is stabiized in the filament's interior. The ATP-DnaA-oriC complex binds and stabilizes one strand of the AT-rich DNA unwinding element (DUE), permitting loading of DNA polymerase. After initiation quickly degrades to an ADP-DnaA complex that is not apt for DNA replication. Binds acidic phospholipids. The chain is Chromosomal replication initiator protein DnaA from Tolumonas auensis (strain DSM 9187 / NBRC 110442 / TA 4).